The chain runs to 499 residues: GTPase Der (499 aa).

EngA-type G domains follow at residues 3-166 and 211-384; these read PVVA…MDEV and IKLA…DCST. Residues 9-16, 56-60, 118-121, 217-224, 264-268, and 329-332 contribute to the GTP site; these read GRPNVGKS, DTGGI, NKTD, DTAGV, and NKWD. The KH-like domain maps to 385-469; sequence RRVNTSMLTR…PIRIQFKEGD (85 aa).

The protein belongs to the TRAFAC class TrmE-Era-EngA-EngB-Septin-like GTPase superfamily. EngA (Der) GTPase family. In terms of assembly, associates with the 50S ribosomal subunit.

In terms of biological role, GTPase that plays an essential role in the late steps of ribosome biogenesis. The sequence is that of GTPase Der from Erwinia tasmaniensis (strain DSM 17950 / CFBP 7177 / CIP 109463 / NCPPB 4357 / Et1/99).